We begin with the raw amino-acid sequence, 211 residues long: Imidazole glycerol phosphate synthase subunit HisH (211 aa).

The region spanning 1-211 is the Glutamine amidotransferase type-1 domain; that stretch reads MIGIIDYGMG…ASIIEGKGSM (211 aa). The Nucleophile role is filled by C79. Active-site residues include H186 and E188.

In terms of assembly, heterodimer of HisH and HisF.

Its subcellular location is the cytoplasm. It catalyses the reaction 5-[(5-phospho-1-deoxy-D-ribulos-1-ylimino)methylamino]-1-(5-phospho-beta-D-ribosyl)imidazole-4-carboxamide + L-glutamine = D-erythro-1-(imidazol-4-yl)glycerol 3-phosphate + 5-amino-1-(5-phospho-beta-D-ribosyl)imidazole-4-carboxamide + L-glutamate + H(+). It carries out the reaction L-glutamine + H2O = L-glutamate + NH4(+). It functions in the pathway amino-acid biosynthesis; L-histidine biosynthesis; L-histidine from 5-phospho-alpha-D-ribose 1-diphosphate: step 5/9. In terms of biological role, IGPS catalyzes the conversion of PRFAR and glutamine to IGP, AICAR and glutamate. The HisH subunit catalyzes the hydrolysis of glutamine to glutamate and ammonia as part of the synthesis of IGP and AICAR. The resulting ammonia molecule is channeled to the active site of HisF. This Geobacillus sp. (strain WCH70) protein is Imidazole glycerol phosphate synthase subunit HisH.